A 251-amino-acid chain; its full sequence is Blue-light absorbing proteorhodopsin (251 aa).

Residues 1-18 form the signal peptide; sequence MGKLLLILGSAIALPSFA. Transmembrane regions (helical) follow at residues 30–50, 65–85, 97–117, 120–140, 144–164, 190–210, and 223–243; these read VGVS…FFFV, VSGL…GVWI, IDWL…LAAC, VAAS…GAGF, AGLA…LYMI, MMMI…AGYL, and LIYN…IWNV. An N6-(retinylidene)lysine modification is found at Lys233.

The protein belongs to the archaeal/bacterial/fungal opsin family. Contains one covalently linked retinal chromophore.

It is found in the cell membrane. Its function is as follows. Light-driven proton pump. May have a regulatory rather than energy harvesting function, based on light-induced opening of proton channels, to modulate cell physiology depending on light intensity variations. Could be, therefore, a sensory rhodopsin, potentially associated with a transducer component. In Gamma-proteobacterium Hot 75m4, this protein is Blue-light absorbing proteorhodopsin.